The chain runs to 575 residues: Alpha-(1,6)-fucosyltransferase (575 aa).

Topologically, residues 1–9 are cytoplasmic; it reads MRPWTGSWR. A helical; Signal-anchor for type II membrane protein membrane pass occupies residues 10–30; the sequence is WIMLILFAWGTLLFYIGGHLV. Residues 31–575 are Lumenal-facing; that stretch reads RDNDHPDHSS…KYPTYPEAEK (545 aa). 3 disulfides stabilise this stretch: Cys204–Cys266, Cys212–Cys230, and Cys218–Cys222. The 288-residue stretch at 206–493 folds into the GT23 domain; it reads KAKKLVCNIN…PDASANFHSL (288 aa). Phosphoserine is present on Ser278. An SH3-binding motif is present at residues 299–305; the sequence is PRPPYLP. The segment at 365–366 is important for donor substrate binding; the sequence is RR. Cysteines 465 and 472 form a disulfide. One can recognise an SH3 domain in the interval 502–563; that stretch reads QNAHNQIAIY…PSYKVREKIE (62 aa).

This sequence belongs to the glycosyltransferase 23 family. In terms of processing, tyrosine phosphorylated by PKDCC/VLK.

Its subcellular location is the golgi apparatus. The protein localises to the golgi stack membrane. The catalysed reaction is N(4)-{beta-D-GlcNAc-(1-&gt;2)-alpha-D-Man-(1-&gt;3)-[beta-D-GlcNAc-(1-&gt;2)-alpha-D-Man-(1-&gt;6)]-beta-D-Man-(1-&gt;4)-beta-D-GlcNAc-(1-&gt;4)-beta-D-GlcNAc}-L-asparaginyl-[protein] + GDP-beta-L-fucose = an N(4)-{beta-D-GlcNAc-(1-&gt;2)-alpha-D-Man-(1-&gt;3)-[beta-D-GlcNAc-(1-&gt;2)-alpha-D-Man-(1-&gt;6)]-beta-D-Man-(1-&gt;4)-beta-D-GlcNAc-(1-&gt;4)-[alpha-L-Fuc-(1-&gt;6)]-beta-D-GlcNAc}-L-asparaginyl-[protein] + GDP + H(+). It functions in the pathway protein modification; protein glycosylation. In terms of biological role, catalyzes the addition of fucose in alpha 1-6 linkage to the first GlcNAc residue, next to the peptide chains in N-glycans. The protein is Alpha-(1,6)-fucosyltransferase (FUT8) of Homo sapiens (Human).